The primary structure comprises 164 residues: MKILISDNISLELFCKNPIKILEKSNKGIIGVLKNKSPIFYVITPYILKKIFDLECNLLDLDKTKQQISKKFSMHPQWTPDKDFIRQAALWGITLTEEILESELASFISYWQAEGCFFHHIQWQQKLARSLQKSRSISYMSQKKRDITYIPTPDQTVPNGFRGK.

It belongs to the DnaT family. Homooligomerizes. Interacts with PriB. Component of the replication restart primosome. Primosome assembly occurs via a 'hand-off' mechanism. PriA binds to replication forks, subsequently PriB then DnaT bind; DnaT then displaces ssDNA to generate the helicase loading substrate.

Functionally, involved in the restart of stalled replication forks, which reloads the replicative helicase on sites other than the origin of replication. Can function in multiple replication restart pathways. Displaces ssDNA from a PriB-ssDNA complex. Probably forms a spiral filament on ssDNA. The chain is Replication restart protein DnaT from Buchnera aphidicola subsp. Acyrthosiphon pisum (strain 5A).